We begin with the raw amino-acid sequence, 110 residues long: Small ribosomal subunit protein bS16 (110 aa).

A disordered region spans residues 87-110 (ARNNPEKAVPRKERKAAAEAAAKK).

It belongs to the bacterial ribosomal protein bS16 family.

The sequence is that of Small ribosomal subunit protein bS16 from Rhodopseudomonas palustris (strain HaA2).